The chain runs to 688 residues: Glycine--tRNA ligase beta subunit (688 aa).

Belongs to the class-II aminoacyl-tRNA synthetase family. Tetramer of two alpha and two beta subunits.

It localises to the cytoplasm. The enzyme catalyses tRNA(Gly) + glycine + ATP = glycyl-tRNA(Gly) + AMP + diphosphate. The polypeptide is Glycine--tRNA ligase beta subunit (Listeria monocytogenes serovar 1/2a (strain ATCC BAA-679 / EGD-e)).